Consider the following 270-residue polypeptide: 4-hydroxy-tetrahydrodipicolinate reductase (270 aa).

NAD(+)-binding positions include 9 to 14 and Glu-35; that span reads GAGGRM. Arg-36 is an NADP(+) binding site. NAD(+)-binding positions include 99 to 101 and 123 to 126; these read GTT and ASNY. Catalysis depends on His-156, which acts as the Proton donor/acceptor. His-157 serves as a coordination point for (S)-2,3,4,5-tetrahydrodipicolinate. Catalysis depends on Lys-160, which acts as the Proton donor. 166-167 lines the (S)-2,3,4,5-tetrahydrodipicolinate pocket; it reads GT.

The protein belongs to the DapB family.

It localises to the cytoplasm. It carries out the reaction (S)-2,3,4,5-tetrahydrodipicolinate + NAD(+) + H2O = (2S,4S)-4-hydroxy-2,3,4,5-tetrahydrodipicolinate + NADH + H(+). The enzyme catalyses (S)-2,3,4,5-tetrahydrodipicolinate + NADP(+) + H2O = (2S,4S)-4-hydroxy-2,3,4,5-tetrahydrodipicolinate + NADPH + H(+). Its pathway is amino-acid biosynthesis; L-lysine biosynthesis via DAP pathway; (S)-tetrahydrodipicolinate from L-aspartate: step 4/4. In terms of biological role, catalyzes the conversion of 4-hydroxy-tetrahydrodipicolinate (HTPA) to tetrahydrodipicolinate. The chain is 4-hydroxy-tetrahydrodipicolinate reductase from Mannheimia succiniciproducens (strain KCTC 0769BP / MBEL55E).